The sequence spans 89 residues: Large ribosomal subunit protein bL27 (89 aa).

A disordered region spans residues 1–22; sequence MAHKKAGGSSRNGRDSESKRLG.

Belongs to the bacterial ribosomal protein bL27 family.

This Rhizobium etli (strain CIAT 652) protein is Large ribosomal subunit protein bL27.